Here is a 182-residue protein sequence, read N- to C-terminus: Small ribosomal subunit protein uS4c (182 aa).

The 62-residue stretch at 82–143 (MRLDNILFRL…KQRSKALIQN (62 aa)) folds into the S4 RNA-binding domain.

Belongs to the universal ribosomal protein uS4 family. As to quaternary structure, part of the 30S ribosomal subunit. Contacts protein S5. The interaction surface between S4 and S5 is involved in control of translational fidelity.

The protein localises to the plastid. It localises to the chloroplast. Functionally, one of the primary rRNA binding proteins, it binds directly to 16S rRNA where it nucleates assembly of the body of the 30S subunit. With S5 and S12 plays an important role in translational accuracy. In Iris domestica (Leopard lily), this protein is Small ribosomal subunit protein uS4c (rps4).